The following is a 981-amino-acid chain: Alpha-mannosidase (981 aa).

The Zn(2+) site is built by H23, D25, and D145. Catalysis depends on D145, which acts as the Nucleophile. N-linked (GlcNAc...) asparagine glycosylation is present at N312. H386 is a Zn(2+) binding site. 3 disulfides stabilise this stretch: C422–C432, C442–C450, and C800–C807. Residue N446 is glycosylated (N-linked (GlcNAc...) asparagine). The tract at residues 938-957 is disordered; that stretch reads KKMKWSVEGDNEQEPQAVRG.

This sequence belongs to the glycosyl hydrolase 38 family. In terms of assembly, dimer of dimers of heavy and light subunits. It depends on Zn(2+) as a cofactor. Post-translationally, produced as a precursor which is then proteolytically cleaved into a 66kD heavy subunit and a 44kD light subunit. Cleavage probably occurs in protein bodies/protein storage vacuoles.

It is found in the protein storage vacuole. It carries out the reaction Hydrolysis of terminal, non-reducing alpha-D-mannose residues in alpha-D-mannosides.. Its activity is regulated as follows. Inhibited by 2,3,4,6-tetra-O-acetyl-5-fluoro-beta-L-gulopyranosyl fluoride which acts as a slow substrate, doubling as a competitive inhibitor as it forms a high steady state concentration of glycosyl-enzyme intermediate that blocks the active site. Inhibited by 2,3,4,6-tetra-O-acetyl-5-fluoro-alpha-D-mannopyranosyl fluoride which also acts as a slow substrate but no intermediates accumulate. Inhibited by EDTA. Inhibited by metal ion Cu(2+). Inhibited by metal ions Fe(2+), Cd(2+) and Co(2+). Inhibited by metal ions Ag(+) and Hg(2+). Competitively inhibited by mannono-1-4-lactone and mannono-1-5-lactone. Inhibited by swainsonine but not by 1-desoxymannojirimycin. Inhibited by pyrrolidine-3,4-diol derivatives. Functionally, liberates mannose from p-nitrophenyl-alpha-D-mannoside. Liberates mannose from further alpha-D-mannosides including methyl-, benzyl-alpha-D-mannoside, 1-6-linked di-, tri- and tetrasaccharides of alpha-D-mannose and mannosyl-rhamnose. Liberates mannose from various glycoproteins like ovalbumin and ovomucoid. Does not hydrolyze beta-D-mannosides. Has glycosyltransferase activity, forming disaccharides from mannose and lyxose but not from glucose, galactose, ribose, xylose or arabinose. The chain is Alpha-mannosidase from Canavalia ensiformis (Jack bean).